A 199-amino-acid chain; its full sequence is MNSASISRLTSVIRTTSVRGFHDRSSVPRVVDDREKSSAKYNDAGYTFRYHQQGVDPLPRIPDCKVPVARPNYKVRDQWNDEAARFGQNDYIDLLGDGSVHPAQLQYHTPTWLRGFPGQHKANELIKLIHYRNLYDSKLKQNSPKRWHELRKRIKYLMMQHNYNKQDEIGRERNLGLWEEEPDYTYKDKSRRSFRDEIH.

Residues 1 to 15 (MNSASISRLTSVIRT) constitute a mitochondrion transit peptide.

It belongs to the mitochondrion-specific ribosomal protein mL51 family. As to quaternary structure, component of the mitochondrial ribosome large subunit (39S) which comprises a 16S rRNA and about 50 distinct proteins.

It localises to the mitochondrion. This chain is Large ribosomal subunit protein mL51 (mrpl-51), found in Caenorhabditis briggsae.